The following is a 397-amino-acid chain: Ribosomal RNA large subunit methyltransferase I (397 aa).

Positions 2–79 (TAAIYLVKGR…KEEINKAFFV (78 aa)) constitute a PUA domain.

Belongs to the methyltransferase superfamily. RlmI family.

Its subcellular location is the cytoplasm. The enzyme catalyses cytidine(1962) in 23S rRNA + S-adenosyl-L-methionine = 5-methylcytidine(1962) in 23S rRNA + S-adenosyl-L-homocysteine + H(+). Specifically methylates the cytosine at position 1962 (m5C1962) of 23S rRNA. The polypeptide is Ribosomal RNA large subunit methyltransferase I (Vibrio parahaemolyticus serotype O3:K6 (strain RIMD 2210633)).